The chain runs to 166 residues: Large ribosomal subunit protein mL49 (166 aa).

A disordered region spans residues 56-78 (RIPDPPKHEHYPTPSGWQPPRDP).

The protein belongs to the mitochondrion-specific ribosomal protein mL49 family. Interacts with OXA1L.

Its subcellular location is the mitochondrion. This is Large ribosomal subunit protein mL49 (MRPL49) from Macaca fascicularis (Crab-eating macaque).